A 507-amino-acid chain; its full sequence is Hippocampus abundant transcript-like protein 1 (507 aa).

Residues 1–27 (MSTDGESPEEPRWKAVASPKASTMPEK) form a disordered region. The Extracellular portion of the chain corresponds to 1 to 51 (MSTDGESPEEPRWKAVASPKASTMPEKRGSAQAASGSWLQGFGHPSVYHAA). The helical transmembrane segment at 52-72 (FVIFLEFFAWGLLTTPMLTVL) threads the bilayer. Topologically, residues 73–84 (HETFPQHTFLMN) are cytoplasmic. The chain crosses the membrane as a helical span at residues 85-105 (GLIQGVKGLLSFLSAPLIGAL). The Extracellular portion of the chain corresponds to 106–113 (SDVWGRKP). The helical transmembrane segment at 114-134 (FLLGTVFFTCFPIPLMRINPW) threads the bilayer. Residues 135–136 (WY) are Cytoplasmic-facing. Residues 137–157 (FGMISVSGVFSVTFSVIFAYV) traverse the membrane as a helical segment. Over 158–170 (ADFTQEHERSTAY) the chain is Extracellular. Residues 171-191 (GWVSATFAASLVSSPAIGTYL) traverse the membrane as a helical segment. Topologically, residues 192–198 (SANYGDS) are cytoplasmic. A helical membrane pass occupies residues 199 to 219 (LVVLVATLVALLDICFILIAV). Over 220–257 (PESLSEKIRPASWGAQISWKQADPFASLKKVGKDSTVL) the chain is Extracellular. Residues 258–278 (LICITVFLSYLPEAGQYSSFF) form a helical membrane-spanning segment. At 279 to 283 (LYLRQ) the chain is on the cytoplasmic side. The chain crosses the membrane as a helical span at residues 284–304 (VIGFGSVKIVAFIAMVGILSI). The Extracellular segment spans residues 305-323 (VAQTVFLSKLMRSLGNKNT). Residues 324–344 (VLLGLGFQMLQLAWYGFGSQA) form a helical membrane-spanning segment. Residues 345 to 347 (WMM) are Cytoplasmic-facing. A helical transmembrane segment spans residues 348-368 (WAAGTVAAMSSITFPAVSALI). At 369 to 389 (SRNAESDQQGVAQGIVTGIRG) the chain is on the extracellular side. A helical transmembrane segment spans residues 390–410 (LCNGLGPALYGFIFYMFHVEL). Topologically, residues 411–430 (SELGPKLNSDDDPLQGAFIP) are cytoplasmic. The chain crosses the membrane as a helical span at residues 431–451 (GPPFLFGACIVLMSFLVALFI). The Extracellular portion of the chain corresponds to 452-507 (PEYRKTSGVQKHNNSTSGSLSTPPERGSDEDIEPLLQDSSIWELSFEEPGNQCTEL). Residues 459-473 (GVQKHNNSTSGSLST) are compositionally biased toward polar residues. The interval 459–483 (GVQKHNNSTSGSLSTPPERGSDEDI) is disordered. Residues Asn464 and Asn465 are each glycosylated (N-linked (GlcNAc...) asparagine).

It belongs to the major facilitator superfamily.

The protein localises to the membrane. This is Hippocampus abundant transcript-like protein 1 from Mus musculus (Mouse).